Here is a 256-residue protein sequence, read N- to C-terminus: Chloroplastic group IIB intron splicing facilitator CRS2, chloroplastic (256 aa).

Residues 1–45 (MSLLAAAIPSTSSHFSAPFLPSFRMPRKSLTAPLHRIRRPRPFTV) constitute a chloroplast transit peptide. A tRNA-binding site is contributed by Tyr74. Catalysis depends on His79, which acts as the Proton acceptor. TRNA-binding residues include Tyr124, Asn126, and Asn172.

It belongs to the PTH family. CRS2 subfamily. In terms of assembly, interacts with CAF1 and CAF2. Part of large ribonucleo-protein complexes that include group IIB introns and either CAF1 or CAF2.

The protein localises to the plastid. It localises to the chloroplast stroma. Functionally, required for the splicing of group IIB introns in chloroplasts. Forms complexes with either CAF1 or CAF2 which, in turn, interact with RNA and confer intron specificity of the splicing particles. Has no peptidyl-tRNA hydrolase activity. This is Chloroplastic group IIB intron splicing facilitator CRS2, chloroplastic (CRS2) from Zea mays (Maize).